A 265-amino-acid polypeptide reads, in one-letter code: Polyphosphate glucokinase (265 aa).

Residues 1 to 18 show a composition bias toward polar residues; sequence MTSTGPETSETPGATTQR. Residues 1-22 form a disordered region; that stretch reads MTSTGPETSETPGATTQRHGFG. Residue 24 to 29 coordinates ATP; the sequence is DVGGSG.

This sequence belongs to the ROK (NagC/XylR) family. As to quaternary structure, homodimer.

It catalyses the reaction [phosphate](n) + D-glucose = [phosphate](n-1) + D-glucose 6-phosphate + H(+). It carries out the reaction D-glucose + ATP = D-glucose 6-phosphate + ADP + H(+). In terms of biological role, catalyzes the phosphorylation of glucose using polyphosphate or ATP as the phosphoryl donor. Polyphosphate, rather than ATP, seems to be the major phosphate donor for the enzyme in M.tuberculosis. This Mycobacterium tuberculosis (strain CDC 1551 / Oshkosh) protein is Polyphosphate glucokinase (ppgK).